The following is a 95-amino-acid chain: Protein TusB (95 aa).

The protein belongs to the DsrH/TusB family. In terms of assembly, heterohexamer, formed by a dimer of trimers. The hexameric TusBCD complex contains 2 copies each of TusB, TusC and TusD. The TusBCD complex interacts with TusE.

It is found in the cytoplasm. In terms of biological role, part of a sulfur-relay system required for 2-thiolation of 5-methylaminomethyl-2-thiouridine (mnm(5)s(2)U) at tRNA wobble positions. This is Protein TusB from Buchnera aphidicola subsp. Baizongia pistaciae (strain Bp).